A 544-amino-acid chain; its full sequence is Putative glycerol-3-phosphate transporter 4 (544 aa).

The next 6 helical transmembrane spans lie at 28–47 (TFRY…YHAS), 121–141 (VAFL…GDSL), 156–176 (FFVG…WFFL), 181–201 (AAGL…GNWF), 218–238 (SVGN…GWGW), and 240–260 (FIAP…FLAA). Positions 281–313 (KRDVEEEEEEVEEDLGTDVEGDGEGSSGSGSGY) are disordered. Acidic residues predominate over residues 285-303 (EEEEEEVEEDLGTDVEGDG). Helical transmembrane passes span 319-339 (VGLL…CLFF), 342-362 (LVAY…TIGG), 371-391 (GNLS…CGYI), 402-422 (AAAF…YGGV), 428-448 (ILLM…ITTA), 471-491 (AIID…TGFL), and 494-514 (LGWQ…GLLL).

It belongs to the major facilitator superfamily. Organophosphate:Pi antiporter (OPA) (TC 2.A.1.4) family.

It is found in the membrane. The protein is Putative glycerol-3-phosphate transporter 4 of Arabidopsis thaliana (Mouse-ear cress).